Reading from the N-terminus, the 1495-residue chain is Chromosome partition protein MukB (1495 aa).

60 to 67 (GGNGAGKS) contacts ATP. Coiled coils occupy residues 322–693 (RART…SQPD), 861–1140 (EDVM…AKVS), and 1233–1289 (IDAI…LQNI). The interval 692–809 (PDGSEDARLN…EIPLFGRAAR (118 aa)) is flexible hinge.

The protein belongs to the SMC family. MukB subfamily. As to quaternary structure, homodimerization via its hinge domain. Binds to DNA via its C-terminal region. Interacts, and probably forms a ternary complex, with MukE and MukF via its C-terminal region. The complex formation is stimulated by calcium or magnesium. Interacts with tubulin-related protein FtsZ.

Its subcellular location is the cytoplasm. The protein resides in the nucleoid. Functionally, plays a central role in chromosome condensation, segregation and cell cycle progression. Functions as a homodimer, which is essential for chromosome partition. Involved in negative DNA supercoiling in vivo, and by this means organize and compact chromosomes. May achieve or facilitate chromosome segregation by condensation DNA from both sides of a centrally located replisome during cell division. This Pasteurella multocida (strain Pm70) protein is Chromosome partition protein MukB.